Consider the following 188-residue polypeptide: Pyridoxal 5'-phosphate synthase subunit PdxT (188 aa).

46–48 (GES) lines the L-glutamine pocket. Cys78 acts as the Nucleophile in catalysis. Residues Arg105 and 134–135 (IR) contribute to the L-glutamine site. Catalysis depends on charge relay system residues His170 and Glu172.

The protein belongs to the glutaminase PdxT/SNO family. As to quaternary structure, in the presence of PdxS, forms a dodecamer of heterodimers. Only shows activity in the heterodimer.

It carries out the reaction aldehydo-D-ribose 5-phosphate + D-glyceraldehyde 3-phosphate + L-glutamine = pyridoxal 5'-phosphate + L-glutamate + phosphate + 3 H2O + H(+). The catalysed reaction is L-glutamine + H2O = L-glutamate + NH4(+). It functions in the pathway cofactor biosynthesis; pyridoxal 5'-phosphate biosynthesis. Its function is as follows. Catalyzes the hydrolysis of glutamine to glutamate and ammonia as part of the biosynthesis of pyridoxal 5'-phosphate. The resulting ammonia molecule is channeled to the active site of PdxS. The polypeptide is Pyridoxal 5'-phosphate synthase subunit PdxT (Desulforamulus reducens (strain ATCC BAA-1160 / DSM 100696 / MI-1) (Desulfotomaculum reducens)).